Here is a 104-residue protein sequence, read N- to C-terminus: Protamine-3 (104 aa).

Residues 1–104 (MGSRCAKLST…PSPEPKQKHS (104 aa)) form a disordered region. Acidic residues predominate over residues 45–70 (EGEEEEEDEEDEEEEDDDEEDEEEEQ). At Ser-96 the chain carries Phosphoserine.

Belongs to the protamine P3 family. In terms of tissue distribution, testis.

The protein resides in the nucleus. It localises to the chromosome. Protamines substitute for histones in the chromatin of sperm during the haploid phase of spermatogenesis. They compact sperm DNA into a highly condensed, stable and inactive complex. This Rattus norvegicus (Rat) protein is Protamine-3 (Prm3).